A 466-amino-acid chain; its full sequence is Adenosylhomocysteinase (466 aa).

Threonine 57, aspartate 132, and glutamate 192 together coordinate substrate. 193–195 (TTT) lines the NAD(+) pocket. 2 residues coordinate substrate: lysine 222 and aspartate 226. Residues asparagine 227, 256 to 261 (GYGDVG), glutamate 279, asparagine 314, 335 to 337 (IGH), and asparagine 380 contribute to the NAD(+) site.

This sequence belongs to the adenosylhomocysteinase family. It depends on NAD(+) as a cofactor.

It localises to the cytoplasm. It catalyses the reaction S-adenosyl-L-homocysteine + H2O = L-homocysteine + adenosine. It functions in the pathway amino-acid biosynthesis; L-homocysteine biosynthesis; L-homocysteine from S-adenosyl-L-homocysteine: step 1/1. Its function is as follows. May play a key role in the regulation of the intracellular concentration of adenosylhomocysteine. The sequence is that of Adenosylhomocysteinase from Brucella anthropi (strain ATCC 49188 / DSM 6882 / CCUG 24695 / JCM 21032 / LMG 3331 / NBRC 15819 / NCTC 12168 / Alc 37) (Ochrobactrum anthropi).